We begin with the raw amino-acid sequence, 57 residues long: NADH dehydrogenase [ubiquinone] 1 beta subcomplex subunit 1 (57 aa).

A helical membrane pass occupies residues 10-26 (HWVHILVPAGFVFGCYL).

Belongs to the complex I NDUFB1 subunit family. Complex I is composed of 45 different subunits.

It localises to the mitochondrion inner membrane. Its function is as follows. Accessory subunit of the mitochondrial membrane respiratory chain NADH dehydrogenase (Complex I) that is believed not to be involved in catalysis. Complex I functions in the transfer of electrons from NADH to the respiratory chain. The immediate electron acceptor for the enzyme is believed to be ubiquinone. This chain is NADH dehydrogenase [ubiquinone] 1 beta subcomplex subunit 1 (Ndufb1), found in Mus musculus (Mouse).